Reading from the N-terminus, the 399-residue chain is MKLMLSLGSLSANSLPIEKKQQVLIDLVIRTYQSHERTELFKAITEYRKNQLIALFPEHANKSYSIIFELMDYRDLIERYPSTLSEEATLLEKVVGQCFMHWLDFWCECEIAAIKAKFPLKENELPAPQLLFEDSAYYGALVERVEDTQLMVQIPSHPQAMPLSDAITLSNLELFIQGEKWYEMLSLLSLSQVGKHFIVLKHPVQDSCPTLVASALIQNWSVRDTWLSYAPQFSNEQWNYCFPSYGYSEFTRLQLFTPSSLSKCYSLPEFDNEFKLQLSDTQAVCEVLRLTVSGNAQQKLYFLYLAQKELMSVLHQAGYKIGFTIIEQPFMLNFYRAIDAKAYFHSGYCDLNDDGKQTYRGFWNFEMMVKAFSNIDFRGYKRAVRASRKRGSLERDEHV.

Belongs to the LuxM / VanM family.

The enzyme catalyses a fatty acyl-[ACP] + S-adenosyl-L-methionine = an N-acyl-L-homoserine lactone + S-methyl-5'-thioadenosine + holo-[ACP] + H(+). Functionally, required for the synthesis of an autoinducer molecule beta-hydroxybutyryl homoserine lactone, which binds to LuxN and thus acts in bioluminescence regulation. The polypeptide is Acyl-homoserine-lactone synthase LuxM (luxM) (Vibrio harveyi (Beneckea harveyi)).